The chain runs to 283 residues: Apidaecins type 73 (283 aa).

Residues 1–18 (KNFALAILVVTFVVAVFG) form the signal peptide. 9 consecutive propeptides follow at residues 19 to 41 (NTNL…EAEP), 62 to 69 (EAEPEAEP), 90 to 97 (EAELEAEP), 118 to 125 (EAEPEAEP), 146 to 153 (EAELEAEP), 174 to 181 (EAEPEAEP), 202 to 209 (EAEPEAEP), 230 to 237 (EAEPEAEP), and 258 to 265 (EAKPEAKP). Positions 19 to 283 (NTNLDPPTRP…PQPRPPHPRI (265 aa)) are disordered. Residues 273–283 (IPQPRPPHPRI) show a composition bias toward pro residues.

This sequence belongs to the apidaecin family.

It localises to the secreted. Its function is as follows. Apidaecins have bactericidal activity; predominantly against Gram-negative bacteria. They seem to interfere with cell propagation. In Apis mellifera (Honeybee), this protein is Apidaecins type 73 (APID73).